A 200-amino-acid chain; its full sequence is Recombination protein RecR (200 aa).

A C4-type zinc finger spans residues 57–72; that stretch reads CDSCQNFSDTEICQIC. Residues 80-175 enclose the Toprim domain; it reads GTLCVVESPS…LITRLAHGIP (96 aa).

This sequence belongs to the RecR family.

Its function is as follows. May play a role in DNA repair. It seems to be involved in an RecBC-independent recombinational process of DNA repair. It may act with RecF and RecO. This chain is Recombination protein RecR, found in Marinobacter nauticus (strain ATCC 700491 / DSM 11845 / VT8) (Marinobacter aquaeolei).